The primary structure comprises 280 residues: 2-dehydro-3-deoxyphosphooctonate aldolase (280 aa).

The protein belongs to the KdsA family.

The protein resides in the cytoplasm. It carries out the reaction D-arabinose 5-phosphate + phosphoenolpyruvate + H2O = 3-deoxy-alpha-D-manno-2-octulosonate-8-phosphate + phosphate. It participates in carbohydrate biosynthesis; 3-deoxy-D-manno-octulosonate biosynthesis; 3-deoxy-D-manno-octulosonate from D-ribulose 5-phosphate: step 2/3. It functions in the pathway bacterial outer membrane biogenesis; lipopolysaccharide biosynthesis. The sequence is that of 2-dehydro-3-deoxyphosphooctonate aldolase from Coxiella burnetii (strain CbuG_Q212) (Coxiella burnetii (strain Q212)).